Here is a 344-residue protein sequence, read N- to C-terminus: Dihydroorotate dehydrogenase (quinone) (344 aa).

FMN contacts are provided by residues 62–66 (AGLDK) and Thr86. Residue Lys66 coordinates substrate. Residue 111 to 115 (NRMGF) participates in substrate binding. 2 residues coordinate FMN: Asn139 and Asn172. Asn172 is a substrate binding site. Ser175 functions as the Nucleophile in the catalytic mechanism. Asn177 is a binding site for substrate. FMN-binding residues include Lys217 and Thr245. A substrate-binding site is contributed by 246–247 (NT). FMN is bound by residues Gly268, Gly297, and 318–319 (YS).

Belongs to the dihydroorotate dehydrogenase family. Type 2 subfamily. Monomer. It depends on FMN as a cofactor.

The protein resides in the cell membrane. It catalyses the reaction (S)-dihydroorotate + a quinone = orotate + a quinol. The protein operates within pyrimidine metabolism; UMP biosynthesis via de novo pathway; orotate from (S)-dihydroorotate (quinone route): step 1/1. In terms of biological role, catalyzes the conversion of dihydroorotate to orotate with quinone as electron acceptor. This chain is Dihydroorotate dehydrogenase (quinone), found in Chromobacterium violaceum (strain ATCC 12472 / DSM 30191 / JCM 1249 / CCUG 213 / NBRC 12614 / NCIMB 9131 / NCTC 9757 / MK).